An 87-amino-acid chain; its full sequence is Large ribosomal subunit protein bL27 (87 aa).

The protein belongs to the bacterial ribosomal protein bL27 family.

The sequence is that of Large ribosomal subunit protein bL27 from Wigglesworthia glossinidia brevipalpis.